A 426-amino-acid polypeptide reads, in one-letter code: Synaptotagmin-13 (426 aa).

Residues 1 to 6 (MVLSVP) lie on the Vesicular side of the membrane. A helical membrane pass occupies residues 7–29 (VIALGATLGTATSILALCGVTCL). Residues 30–426 (CRHMHPKKGL…QIAMWHQLHL (397 aa)) are Cytoplasmic-facing. 2 C2 domains span residues 158-275 (QAPK…AQWG) and 287-422 (GTGE…AMWH).

The protein belongs to the synaptotagmin family. In terms of assembly, interacts with NRXN1. Expressed in brain, spleen, kidney and testis.

Its subcellular location is the membrane. In terms of biological role, may be involved in transport vesicle docking to the plasma membrane. The polypeptide is Synaptotagmin-13 (Syt13) (Rattus norvegicus (Rat)).